A 215-amino-acid chain; its full sequence is Cytochrome b6 (215 aa).

A helical transmembrane segment spans residues 32–52 (IFYCLGGITLTCFLVQVATGF). Residue C35 coordinates heme c. Positions 86 and 100 each coordinate heme b. A run of 3 helical transmembrane segments spans residues 90–110 (ASMMVLMMILHIFRVYLTGGF), 116–136 (LTWVTGVILAVLTVSFGVTGY), and 186–206 (LHTFVLPLLTAVFMLMHFLMI). Positions 187 and 202 each coordinate heme b.

The protein belongs to the cytochrome b family. PetB subfamily. The 4 large subunits of the cytochrome b6-f complex are cytochrome b6, subunit IV (17 kDa polypeptide, PetD), cytochrome f and the Rieske protein, while the 4 small subunits are PetG, PetL, PetM and PetN. The complex functions as a dimer. Heme b is required as a cofactor. The cofactor is heme c.

It is found in the plastid. Its subcellular location is the chloroplast thylakoid membrane. Its function is as follows. Component of the cytochrome b6-f complex, which mediates electron transfer between photosystem II (PSII) and photosystem I (PSI), cyclic electron flow around PSI, and state transitions. The polypeptide is Cytochrome b6 (Physcomitrium patens (Spreading-leaved earth moss)).